The chain runs to 72 residues: Cytochrome c oxidase copper chaperone 2 (72 aa).

Cu cation-binding residues include Cys32 and Cys33. The region spanning 32-72 (CCACPDTKKLRDECIVEHGESACTKWIEAHILCLRSEGFKV) is the CHCH domain. 2 consecutive short sequence motifs (cx9C motif) follow at residues 35–45 (CPDTKKLRDEC) and 54–64 (CTKWIEAHILC). Intrachain disulfides connect Cys35–Cys64 and Cys45–Cys54.

It belongs to the COX17 family.

It is found in the mitochondrion intermembrane space. In terms of biological role, copper chaperone for cytochrome c oxidase (COX). Binds 2 copper ions and delivers them to the Cu(A) site of COX. This chain is Cytochrome c oxidase copper chaperone 2 (COX17-2), found in Arabidopsis thaliana (Mouse-ear cress).